Reading from the N-terminus, the 298-residue chain is KH domain-containing protein At1g09660/At1g09670 (298 aa).

A KH domain is found at 152 to 219; sequence DVPVDKYPSY…EHLCEPLHVL (68 aa). The segment at 266–298 is disordered; the sequence is NGTLREESPSPSLSPCLSPSMSPFNSKRAKTEI. Ser273 and Ser287 each carry phosphoserine. Residues 274-288 show a composition bias toward low complexity; sequence PSPSLSPCLSPSMSP.

Its subcellular location is the nucleus. The sequence is that of KH domain-containing protein At1g09660/At1g09670 from Arabidopsis thaliana (Mouse-ear cress).